Consider the following 381-residue polypeptide: 5-cytosine rRNA methyltransferase NSUN4 (381 aa).

A mitochondrion-targeting transit peptide spans 1 to 25 (MAAPVLRCVRKLLKLVDFTPVPRRY). S-adenosyl-L-methionine-binding residues include G182, G183, K184, and D201. S203 is modified (phosphoserine). 4 residues coordinate S-adenosyl-L-methionine: R206, D234, G235, and D252. The active-site Nucleophile is the C307.

The protein belongs to the class I-like SAM-binding methyltransferase superfamily. RsmB/NOP family. In terms of assembly, heterodimer with MTERFD2/MTERF4; this interaction seems to be required for NSUN4 recruitment to the mitochondrial large ribosomal subunit.

It localises to the mitochondrion. It carries out the reaction a cytidine in rRNA + S-adenosyl-L-methionine = a 5-methylcytidine in rRNA + S-adenosyl-L-homocysteine + H(+). The catalysed reaction is a cytidine in mRNA + S-adenosyl-L-methionine = a 5-methylcytidine in mRNA + S-adenosyl-L-homocysteine + H(+). Mitochondrial RNA cytosine C(5)-methyltransferase that methylates cytosine to 5-methylcytosine (m5C) in various RNAs, such as rRNAs, mRNAs and some long non-coding RNAs (lncRNAs). Involved in mitochondrial ribosome small subunit (SSU) maturation by catalyzing methylation of mitochondrial 12S rRNA; the function is independent of MTERFD2/MTERF4 and assembled mitochondrial ribosome large subunit (LSU). Targeted to LSU by MTERFD2/MTERF4 and probably is involved in a final step in ribosome biogenesis to ensure that SSU and LSU are assembled. In vitro can methylate 16S rRNA of the LSU; the methylation is enhanced by MTERFD/MTERF4. Also acts as a regulator of innate immunity by marking double-stranded mitochondrial RNAs(mt-dsRNAs) generated in response to stress: catalyzes m5C modification on mitochondrial RNAs, such as a mRNAs and lncRNAs, with a preference for the termini of light-strand lncRNAs, promoting their degradation and cytosolic release. Modified light-strand lncRNAs are then recognized by C1QBP reader and recruited to the mitochondrial degradosome complex, which promotes their degradation. This chain is 5-cytosine rRNA methyltransferase NSUN4, found in Mus musculus (Mouse).